The following is a 307-amino-acid chain: Oxygen-dependent coproporphyrinogen-III oxidase (307 aa).

S94 contributes to the substrate binding site. H98 and H108 together coordinate a divalent metal cation. The Proton donor role is filled by H108. 110–112 (NVR) contributes to the substrate binding site. 2 residues coordinate a divalent metal cation: H147 and H177. Positions 242–277 (YVEFNLVWDRGTLFGLQSGGRTESILMSMPPLAQWQ) are important for dimerization. 260 to 262 (GGR) is a binding site for substrate.

Belongs to the aerobic coproporphyrinogen-III oxidase family. In terms of assembly, homodimer. It depends on a divalent metal cation as a cofactor.

It localises to the cytoplasm. It catalyses the reaction coproporphyrinogen III + O2 + 2 H(+) = protoporphyrinogen IX + 2 CO2 + 2 H2O. Its pathway is porphyrin-containing compound metabolism; protoporphyrin-IX biosynthesis; protoporphyrinogen-IX from coproporphyrinogen-III (O2 route): step 1/1. Involved in the heme biosynthesis. Catalyzes the aerobic oxidative decarboxylation of propionate groups of rings A and B of coproporphyrinogen-III to yield the vinyl groups in protoporphyrinogen-IX. The polypeptide is Oxygen-dependent coproporphyrinogen-III oxidase (Chromohalobacter salexigens (strain ATCC BAA-138 / DSM 3043 / CIP 106854 / NCIMB 13768 / 1H11)).